Here is a 341-residue protein sequence, read N- to C-terminus: Pre-mRNA-processing protein 45 (341 aa).

Disordered regions lie at residues 1–31 (MFSS…HEKS), 181–226 (NYQE…EDQA), and 302–341 (EQHE…KTKY). Over residues 192-201 (FKLRKNRHKN) the composition is skewed to basic residues. Over residues 302 to 318 (EQHEKENKLKELADIAR) the composition is skewed to basic and acidic residues.

Belongs to the SNW family. As to quaternary structure, associated with the spliceosome.

The protein localises to the nucleus. In terms of biological role, involved in pre-mRNA splicing. In Debaryomyces hansenii (strain ATCC 36239 / CBS 767 / BCRC 21394 / JCM 1990 / NBRC 0083 / IGC 2968) (Yeast), this protein is Pre-mRNA-processing protein 45 (PRP45).